We begin with the raw amino-acid sequence, 593 residues long: La-related protein 7 (593 aa).

Residues 1-11 (MTAIETDTPSN) show a composition bias toward polar residues. The disordered stretch occupies residues 1 to 28 (MTAIETDTPSNKVKEDESTDLRKDREKK). Basic and acidic residues predominate over residues 12-24 (KVKEDESTDLRKD). An HTH La-type RNA-binding domain is found at 30–121 (RSRVKQLLAD…RRRFPLGEKP (92 aa)). Residues 127 to 205 (RTVYVELLPK…PRKAGMFPKT (79 aa)) form the RRM domain. The disordered stretch occupies residues 191–363 (PPEEAPRKAG…STEEEKDAVD (173 aa)). The segment covering 231–240 (KKKKKKKSKA) has biased composition (basic residues). Residues 248 to 259 (AEEDTKEQDMDI) show a composition bias toward acidic residues. Basic and acidic residues-rich tracts occupy residues 295–307 (ERAE…EKVR), 314–340 (SSSE…DEKP), and 348–363 (QECK…DAVD). Positions 461–574 (QFVCGVIGKI…TEKLIAKAEK (114 aa)) constitute a xRRM domain.

The protein belongs to the LARP7 family. Core component of the 7SK RNP complex. Associates with box C/D small nucleolar ribonucleoprotein (snoRNP) complexes.

The protein localises to the nucleus. The protein resides in the nucleoplasm. In terms of biological role, RNA-binding protein that specifically binds distinct small nuclear RNA (snRNAs) and regulates their processing and function. Specifically binds the 7SK snRNA (7SK RNA) and acts as a core component of the 7SK ribonucleoprotein (RNP) complex, thereby acting as a negative regulator of transcription elongation by RNA polymerase II. The 7SK RNP complex sequesters the positive transcription elongation factor b (P-TEFb) in a large inactive 7SK RNP complex preventing RNA polymerase II phosphorylation and subsequent transcriptional elongation. The 7SK RNP complex also promotes snRNA gene transcription by RNA polymerase II via interaction with the little elongation complex (LEC). LARP7 specifically binds to the highly conserved 3'-terminal U-rich stretch of 7SK RNA; on stimulation, remains associated with 7SK RNA, whereas P-TEFb is released from the complex. LARP7 also acts as a regulator of mRNA splicing fidelity by promoting U6 snRNA processing. Specifically binds U6 snRNAs and associates with a subset of box C/D RNP complexes: promotes U6 snRNA 2'-O-methylation by facilitating U6 snRNA loading into box C/D RNP complexes. U6 snRNA 2'-O-methylation is required for mRNA splicing fidelity. This chain is La-related protein 7, found in Xenopus tropicalis (Western clawed frog).